Consider the following 566-residue polypeptide: Medium-chain fatty-acid--CoA ligase (566 aa).

ATP is bound at residue 231–242 (ILASERAYCARL).

It belongs to the ATP-dependent AMP-binding enzyme family. In terms of assembly, homodimer. Requires Mg(2+) as cofactor.

Its subcellular location is the cell membrane. The enzyme catalyses hexanoate + ATP + CoA = hexanoyl-CoA + AMP + diphosphate. The catalysed reaction is octanoate + ATP + CoA = octanoyl-CoA + AMP + diphosphate. It carries out the reaction dodecanoate + ATP + CoA = dodecanoyl-CoA + AMP + diphosphate. It functions in the pathway lipid metabolism; fatty acid beta-oxidation. Functionally, catalyzes the esterification, concomitant with transport, of exogenous fatty acids into metabolically active CoA thioesters for subsequent degradation or incorporation into phospholipids. Is maximally active on C6:0, C8:0 and C12:0 fatty acids, while has a low activity on C14-C18 chain length fatty acids. Is involved in the anaerobic beta-oxidative degradation of fatty acids, which allows anaerobic growth of E.coli on fatty acids as a sole carbon and energy source in the presence of nitrate or fumarate as a terminal electron acceptor. Can functionally replace FadD under anaerobic conditions. This is Medium-chain fatty-acid--CoA ligase from Escherichia coli (strain K12).